Reading from the N-terminus, the 595-residue chain is UvrABC system protein C (595 aa).

The GIY-YIG domain maps to 14 to 91 (SNPGCYLHKD…IQENMPKFNI (78 aa)). Positions 196-231 (DKIVNQLKAKMKDMSDQMAFERAAEYRDLIEAVSTL) constitute a UVR domain.

Belongs to the UvrC family. As to quaternary structure, interacts with UvrB in an incision complex.

The protein localises to the cytoplasm. The UvrABC repair system catalyzes the recognition and processing of DNA lesions. UvrC both incises the 5' and 3' sides of the lesion. The N-terminal half is responsible for the 3' incision and the C-terminal half is responsible for the 5' incision. This is UvrABC system protein C from Streptococcus thermophilus (strain ATCC BAA-491 / LMD-9).